A 338-amino-acid chain; its full sequence is Uroporphyrinogen decarboxylase (338 aa).

Substrate-binding positions include 27-31, Asp77, Tyr151, Ser203, and His317; that span reads RQAGR.

Belongs to the uroporphyrinogen decarboxylase family. In terms of assembly, homodimer.

The protein localises to the cytoplasm. The catalysed reaction is uroporphyrinogen III + 4 H(+) = coproporphyrinogen III + 4 CO2. Its pathway is porphyrin-containing compound metabolism; protoporphyrin-IX biosynthesis; coproporphyrinogen-III from 5-aminolevulinate: step 4/4. Catalyzes the decarboxylation of four acetate groups of uroporphyrinogen-III to yield coproporphyrinogen-III. In Wolbachia pipientis wMel, this protein is Uroporphyrinogen decarboxylase.